The primary structure comprises 1431 residues: Zinc finger protein 687b (1431 aa).

Disordered stretches follow at residues lysine 24–lysine 481 and lysine 504–glycine 538. Low complexity predominate over residues serine 61–serine 73. A compositionally biased stretch (polar residues) spans glycine 103 to glycine 122. Low complexity-rich tracts occupy residues methionine 174–leucine 188, alanine 196–proline 209, and leucine 217–proline 248. The span at leucine 249 to alanine 267 shows a compositional bias: polar residues. Residues serine 311 to proline 324 are compositionally biased toward low complexity. The span at arginine 342–serine 359 shows a compositional bias: polar residues. Positions proline 361 to proline 377 are enriched in basic and acidic residues. Positions proline 385–alanine 410 are enriched in low complexity. Over residues aspartate 438–valine 449 the composition is skewed to basic and acidic residues. Positions glutamine 519–lysine 528 are enriched in gly residues. A C2H2-type 1; degenerate zinc finger spans residues tyrosine 674–histidine 692. The tract at residues threonine 754–proline 816 is disordered. Residues leucine 760–proline 775 show a composition bias toward low complexity. Polar residues predominate over residues alanine 781–serine 802. Residues phenylalanine 830 to arginine 853 form a C2H2-type 2; degenerate zinc finger. C2H2-type zinc fingers lie at residues tyrosine 919 to histidine 942, histidine 947 to histidine 970, tyrosine 982 to histidine 1004, and phenylalanine 1013 to histidine 1036. Residues valine 1041–methionine 1120 are disordered. Positions alanine 1043–alanine 1057 are enriched in low complexity. Residues glycine 1058 to leucine 1075 are compositionally biased toward polar residues. Residues glycine 1080–glutamine 1111 show a composition bias toward acidic residues. The C2H2-type 7 zinc-finger motif lies at tryptophan 1122–histidine 1145. A C2H2-type 8; degenerate zinc finger spans residues tryptophan 1205 to arginine 1227. Residues arginine 1225–threonine 1310 are disordered. 2 consecutive C2H2-type zinc fingers follow at residues phenylalanine 1307–histidine 1329 and glutamine 1337–histidine 1360. The tract at residues leucine 1362–aspartate 1392 is disordered. Residues proline 1373–serine 1384 show a composition bias toward polar residues. The segment at valine 1395–histidine 1425 adopts a C2H2-type 11 zinc-finger fold.

It belongs to the krueppel C2H2-type zinc-finger protein family. In terms of tissue distribution, widely expressed with highest levels in eye, spleen and ovary.

The protein resides in the nucleus. Functionally, may be involved in transcriptional regulation. In Danio rerio (Zebrafish), this protein is Zinc finger protein 687b (znf687b).